A 299-amino-acid polypeptide reads, in one-letter code: Acetylglutamate kinase (299 aa).

Residues G68–G69, R90, and N195 contribute to the substrate site.

It belongs to the acetylglutamate kinase family. ArgB subfamily.

The protein resides in the cytoplasm. It catalyses the reaction N-acetyl-L-glutamate + ATP = N-acetyl-L-glutamyl 5-phosphate + ADP. The protein operates within amino-acid biosynthesis; L-arginine biosynthesis; N(2)-acetyl-L-ornithine from L-glutamate: step 2/4. Its function is as follows. Catalyzes the ATP-dependent phosphorylation of N-acetyl-L-glutamate. The protein is Acetylglutamate kinase of Erythrobacter litoralis (strain HTCC2594).